The following is a 550-amino-acid chain: Luciferin 4-monooxygenase (550 aa).

The Microbody targeting signal motif lies at 548–550 (SKL).

Belongs to the ATP-dependent AMP-binding enzyme family. Mg(2+) serves as cofactor.

It localises to the peroxisome. The catalysed reaction is firefly D-luciferin + ATP + O2 = firefly oxyluciferin + hnu + AMP + CO2 + diphosphate. Produces green light with a wavelength of 562 nm. The chain is Luciferin 4-monooxygenase from Photinus pyralis (Common eastern firefly).